The chain runs to 251 residues: MGRSRSRSSSRSKHSKHSRKRSRSKSKSKKRSRSKEPKRNRRSRSRSGSRRDRGGSPPDRTDMFGRTLSKRNNDEKQKREEEDRRVEIERQRKIRQQEIEERLIEEETARRVEELVARRVEEELEKRRDEIEHEVLRRVEEAKRIMEAQLLQELERQRQAELNAQKAREEEEKSKRVELERILEENNRKIADAQAKLAEDQLRIVEEQRKIHEERMKLEQERQKQQKEEQKMILGKGKSRPRLSFSLKATE.

Residues 1–48 are compositionally biased toward basic residues; sequence MGRSRSRSSSRSKHSKHSRKRSRSKSKSKKRSRSKEPKRNRRSRSRSG. Residues 1–53 form a necessary and sufficient for RNA binding region; it reads MGRSRSRSSSRSKHSKHSRKRSRSKSKSKKRSRSKEPKRNRRSRSRSGSRRDR. 2 disordered regions span residues 1–92 and 215–251; these read MGRS…ERQR and RMKLEQERQKQQKEEQKMILGKGKSRPRLSFSLKATE. 3 stretches are compositionally biased toward basic and acidic residues: residues 49–63, 71–92, and 215–231; these read SRRDRGGSPPDRTDM, RNNDEKQKREEEDRRVEIERQR, and RMKLEQERQKQQKEEQK. Residues 54–251 form a necessary and sufficient for transcriptional regulation region; sequence GGSPPDRTDM…RLSFSLKATE (198 aa).

The protein belongs to the ARGLU1 family.

It localises to the nucleus. The protein resides in the nucleus speckle. The protein localises to the chromosome. In terms of biological role, dual function regulator of gene expression; regulator of transcription and modulator of alternative splicing. General coactivator of nuclear receptor-induced gene expression. The chain is Arginine and glutamate-rich protein 1-A (arglu1a) from Danio rerio (Zebrafish).